Reading from the N-terminus, the 881-residue chain is DNA mismatch repair protein MutS (881 aa).

Residue Gly-612–Ser-619 coordinates ATP.

The protein belongs to the DNA mismatch repair MutS family.

Functionally, this protein is involved in the repair of mismatches in DNA. It is possible that it carries out the mismatch recognition step. This protein has a weak ATPase activity. This is DNA mismatch repair protein MutS from Clostridium tetani (strain Massachusetts / E88).